The primary structure comprises 158 residues: C-type lectin galactose-binding isoform (158 aa).

Positions 1–23 are cleaved as a signal peptide; that stretch reads MGRFLLVTLSLLVVAFSLNGANS. Intrachain disulfides connect C26–C37, C54–C154, and C129–C146. Residues 33–155 form the C-type lectin domain; that stretch reads RNGFCYKVFN…CTALRPFLCQ (123 aa). Ca(2+) is bound by residues Q119, D121, and E127. A Galactose-binding motif is present at residues 119-121; sequence QPD. N134 carries N-linked (GlcNAc...) asparagine glycosylation. Residues N142 and D143 each contribute to the Ca(2+) site.

This sequence belongs to the true venom lectin family. As to quaternary structure, homodimer; disulfide-linked. In terms of tissue distribution, expressed by the venom gland.

It is found in the secreted. Its function is as follows. Galactose-binding lectin that binds to and agglutinates erythrocytes in a calcium-dependent manner. This chain is C-type lectin galactose-binding isoform, found in Pseudechis porphyriacus (Red-bellied black snake).